Here is a 323-residue protein sequence, read N- to C-terminus: Aquaporin-4 (323 aa).

At 1–36 the chain is on the cytoplasmic side; the sequence is MSDGAAARRWGKCGHSCSRESIMVAFKGVWTQAFWK. S-palmitoyl cysteine attachment occurs at residues C13 and C17. Residues 37–57 traverse the membrane as a helical segment; it reads AVSAEFLATLIFVLLGVGSTI. The Extracellular segment spans residues 58 to 69; sequence NWGGSENPLPVD. A helical transmembrane segment spans residues 70–89; the sequence is MVLISLCFGLSIATMVQCFG. Over 90-93 the chain is Cytoplasmic; sequence HISG. The discontinuously helical intramembrane region spans 94 to 101; it reads GHINPAVT. An NPA 1 motif is present at residues 97-99; it reads NPA. Topologically, residues 102 to 115 are cytoplasmic; it reads VAMVCTRKISIAKS. S111 bears the Phosphoserine; by PKG mark. The chain crosses the membrane as a helical span at residues 116-136; the sequence is VFYIIAQCLGAIIGAGILYLV. Topologically, residues 137–155 are extracellular; that stretch reads TPPSVVGGLGVTTVHGNLT. N-linked (GlcNAc...) asparagine glycosylation occurs at N153. Residues 156-176 traverse the membrane as a helical segment; sequence AGHGLLVELIITFQLVFTIFA. The Cytoplasmic portion of the chain corresponds to 177 to 184; that stretch reads SCDSKRTD. S180 is modified (phosphoserine; by PKC). The chain crosses the membrane as a helical span at residues 185–205; sequence VTGSIALAIGFSVAIGHLFAI. N206 carries N-linked (GlcNAc...) asparagine glycosylation. Residues 206–208 lie on the Extracellular side of the membrane; it reads NYT. Residues 209–222 constitute an intramembrane region (discontinuously helical); that stretch reads GASMNPARSFGPAV. Positions 213 to 215 match the NPA 2 motif; that stretch reads NPA. Residues 223–231 lie on the Extracellular side of the membrane; the sequence is IMGNWANHW. A helical membrane pass occupies residues 232 to 252; that stretch reads IYWVGPIMGAVLAGALYEYVF. The Cytoplasmic portion of the chain corresponds to 253–323; the sequence is CPDVELKRRL…DSSGEVLSSV (71 aa). Phosphoserine is present on residues S276 and S285. A Phosphothreonine modification is found at T289. A Phosphoserine modification is found at S321.

The protein belongs to the MIP/aquaporin (TC 1.A.8) family. As to quaternary structure, homotetramer. The tetramers can form oligomeric arrays in membranes. The size of the oligomers differs between tissues and is smaller in skeletal muscle than in brain. Interaction between AQP4 oligomeric arrays in close-by cells can contribute to cell-cell adhesion. Part of a complex containing MLC1, TRPV4, HEPACAM and ATP1B1. Phosphorylation by PKC at Ser-180 reduces conductance by 50%. Phosphorylation by PKG at Ser-111 in response to glutamate increases conductance by 40%; this increase is not due to increased presence at the cell membrane. In terms of processing, isoform 2: Palmitoylated on its N-terminal region. Isoform 1: Not palmitoylated. In terms of tissue distribution, detected in brain cortex, especially around cortical blood vessels, and subjacent to pia, with lower levels in parenchymal membranes. Detected in ependymal and astroglial cells in brain. Detected in supporting Hensen's cells, inner sulcus cells and Claudius cells in the inner ear. Detected in skeletal muscle. Detected in gastric parietal cells. Detected in principal cells in collecting ducts in kidney medulla (at protein level). Detected in brain, heart and skeletal muscle.

The protein localises to the cell membrane. It is found in the basolateral cell membrane. The protein resides in the endosome membrane. It localises to the sarcolemma. Its subcellular location is the cell projection. The catalysed reaction is H2O(in) = H2O(out). Forms a water-specific channel. Plays an important role in brain water homeostasis and in glymphatic solute transport. Required for a normal rate of water exchange across the blood brain interface. Required for normal levels of cerebrospinal fluid influx into the brain cortex and parenchyma along paravascular spaces that surround penetrating arteries, and for normal drainage of interstitial fluid along paravenous drainage pathways. Thereby, it is required for normal clearance of solutes from the brain interstitial fluid, including soluble beta-amyloid peptides derived from APP. Plays a redundant role in urinary water homeostasis and urinary concentrating ability. The polypeptide is Aquaporin-4 (Aqp4) (Mus musculus (Mouse)).